The primary structure comprises 712 residues: Autophagy-related protein 13 (712 aa).

Disordered regions lie at residues 388–443 (AGST…ETPP) and 568–611 (GSVG…DDDE). The segment covering 402 to 415 (SSVGSGSKYSSSFG) has biased composition (low complexity). An ATG17-binding region spans residues 412 to 420 (SSFGRIRRH). Positions 424 to 439 (RRSESIDRTAKPRKSN) are enriched in basic and acidic residues. An ATG1-binding region spans residues 441–500 (TPPEDLLEFVKLLEDKKELNMKPSTILPQQDISSSLIKFQSMKPNNDTLSDNLSMSMSID). Over residues 576 to 585 (TNEDSKEDED) the composition is skewed to acidic residues.

It belongs to the ATG13 family. Fungi subfamily. In terms of assembly, hypophosphorylated form interacts with ATG1 to form the ATG1-ATG13 kinase complex. The ATG1-ATG13 complex interacts with the ATG17-ATG29-ATG31 complex through direct interaction with ATG17. Interacts with VAC8. In terms of processing, hyperphosphorylated under nutrient-rich conditions. Starvation and TOR inactivation results in ATG13 partial dephosphorylation leading to ATG1-binding. Dephosphorylation induces ATG17-binding.

The protein localises to the cytoplasm. It localises to the preautophagosomal structure. Activates the ATG1 kinase in a nutritional condition dependent manner through the TOR pathway, leading to autophagy. Involved in ATG9 and ATG23 cycling through the pre-autophagosomal structure. Also involved in cytoplasm to vacuole transport (Cvt) and more specifically in Cvt vesicle formation. Seems to play a role in the switching machinery regulating the conversion between the Cvt pathway and autophagy. Finally, ATG13 is also required for glycogen storage during stationary phase. In Kluyveromyces marxianus (strain DMKU3-1042 / BCC 29191 / NBRC 104275) (Yeast), this protein is Autophagy-related protein 13.